The chain runs to 319 residues: Guanidinobutyrase (319 aa).

Mn(2+)-binding residues include histidine 129, aspartate 152, histidine 154, aspartate 156, aspartate 243, and aspartate 245.

It belongs to the arginase family. Agmatinase subfamily. Homohexamer. The cofactor is Mn(2+).

The catalysed reaction is 4-guanidinobutanoate + H2O = urea + 4-aminobutanoate. Catalyzes specifically the hydrolysis of 4-guanidinobutanoate to 4-aminobutanoate and urea. Has no activity against arginine, agmatine, 3-guanidinopropionate and guanidinoacetate. The sequence is that of Guanidinobutyrase (gbuA) from Pseudomonas aeruginosa (strain ATCC 15692 / DSM 22644 / CIP 104116 / JCM 14847 / LMG 12228 / 1C / PRS 101 / PAO1).